The chain runs to 57 residues: Small ribosomal subunit protein bS21 (57 aa).

The disordered stretch occupies residues 35-57 (REFYEKPSVRRKKKSEAARKRKY). Residues 43–57 (VRRKKKSEAARKRKY) are compositionally biased toward basic residues.

This sequence belongs to the bacterial ribosomal protein bS21 family.

In Bacillus licheniformis (strain ATCC 14580 / DSM 13 / JCM 2505 / CCUG 7422 / NBRC 12200 / NCIMB 9375 / NCTC 10341 / NRRL NRS-1264 / Gibson 46), this protein is Small ribosomal subunit protein bS21.